The sequence spans 325 residues: MLTGKMKLIDRVSAINWNWLQDDKDAEVWDRLTGNFWLPEKVPVSNDLPSWGTLTASEKQLTMRVFTGLTLLDTIQGTVGAVSLIPDALTPHEEAVYTNIAFMESVHAKSYSSIFSTLCSTAEIDEAFRWSEENNNLQRKAKIVMEYYRGDEPLKRKVASTLLESFLFYSGFYLPMYWSSRAKLTNTADMIRLIIRDEAVHGYYIGYKFQRGLVLVDDARRAELKEYTYELLFELYDNEVEYTQDLYDRVGLTEDVKKFLRYNANKALMNLGYEALFPRDETDVNPAILSALSPNADENHDFFSGSGSSYVIGKAVVTEDEDWDF.

Fe cation-binding residues include aspartate 73, glutamate 104, and histidine 107. The active site involves tyrosine 111. Fe cation contacts are provided by glutamate 164, glutamate 198, and histidine 201.

It belongs to the ribonucleoside diphosphate reductase small chain family. Tetramer of two alpha and two beta subunits. It depends on Fe cation as a cofactor.

The enzyme catalyses a 2'-deoxyribonucleoside 5'-diphosphate + [thioredoxin]-disulfide + H2O = a ribonucleoside 5'-diphosphate + [thioredoxin]-dithiol. Functionally, provides the precursors necessary for DNA synthesis. Catalyzes the biosynthesis of deoxyribonucleotides from the corresponding ribonucleotides. The protein is Ribonucleoside-diphosphate reductase subunit beta (nrdF) of Mycobacterium leprae (strain TN).